Reading from the N-terminus, the 56-residue chain is Potassium channel toxin alpha-KTx 9.2 (56 aa).

The first 28 residues, 1–28 (MSRLFTLVLIVLAMNVMMAIISDPVVEA), serve as a signal peptide directing secretion. Disulfide bonds link Cys-31/Cys-47, Cys-34/Cys-52, and Cys-38/Cys-54.

As to expression, expressed by the venom gland.

The protein resides in the secreted. Its function is as follows. Blocks small conductance calcium-activated potassium channels (KCNN, SK). Low toxicity by intracerebroventricular injection into mice. The protein is Potassium channel toxin alpha-KTx 9.2 of Olivierus martensii (Manchurian scorpion).